The sequence spans 757 residues: MAFISRSKRYQSKARVYLSLPRSSNSSLFSLPRLFSTIEETQTPANANPETQSPDAKSETKKNLTSTETRPLRERFQRGKRQNHEKLEDTICRMMDNRAWTTRLQNSIRDLVPEWDHSLVYNVLHGAKKLEHALQFFRWTERSGLIRHDRDTHMKMIKMLGEVSKLNHARCILLDMPEKGVPWDEDMFVVLIESYGKAGIVQESVKIFQKMKDLGVERTIKSYNSLFKVILRRGRYMMAKRYFNKMVSEGVEPTRHTYNLMLWGFFLSLRLETALRFFEDMKTRGISPDDATFNTMINGFCRFKKMDEAEKLFVEMKGNKIGPSVVSYTTMIKGYLAVDRVDDGLRIFEEMRSSGIEPNATTYSTLLPGLCDAGKMVEAKNILKNMMAKHIAPKDNSIFLKLLVSQSKAGDMAAATEVLKAMATLNVPAEAGHYGVLIENQCKASAYNRAIKLLDTLIEKEIILRHQDTLEMEPSAYNPIIEYLCNNGQTAKAEVLFRQLMKRGVQDQDALNNLIRGHAKEGNPDSSYEILKIMSRRGVPRESNAYELLIKSYMSKGEPGDAKTALDSMVEDGHVPDSSLFRSVIESLFEDGRVQTASRVMMIMIDKNVGIEDNMDLIAKILEALLMRGHVEEALGRIDLLNQNGHTADLDSLLSVLSEKGKTIAALKLLDFGLERDLSLEFSSYDKVLDALLGAGKTLNAYSVLCKIMEKGSSTDWKSSDELIKSLNQEGNTKQADVLSRMIKKGQGIKKQNNVSL.

Residues 39–55 (EETQTPANANPETQSPD) are compositionally biased toward polar residues. Residues 39–82 (EETQTPANANPETQSPDAKSETKKNLTSTETRPLRERFQRGKRQ) are disordered. A compositionally biased stretch (basic and acidic residues) spans 70–82 (RPLRERFQRGKRQ). PPR repeat units lie at residues 149–183 (DRDTHMKMIKMLGEVSKLNHARCILLDMPEKGVPW), 184–218 (DEDMFVVLIESYGKAGIVQESVKIFQKMKDLGVER), 219–253 (TIKSYNSLFKVILRRGRYMMAKRYFNKMVSEGVEP), 254–288 (TRHTYNLMLWGFFLSLRLETALRFFEDMKTRGISP), 289–323 (DDATFNTMINGFCRFKKMDEAEKLFVEMKGNKIGP), 324–358 (SVVSYTTMIKGYLAVDRVDDGLRIFEEMRSSGIEP), 359–393 (NATTYSTLLPGLCDAGKMVEAKNILKNMMAKHIAP), 395–429 (DNSIFLKLLVSQSKAGDMAAATEVLKAMATLNVPA), 430–464 (EAGHYGVLIENQCKASAYNRAIKLLDTLIEKEIIL), 473–507 (EPSAYNPIIEYLCNNGQTAKAEVLFRQLMKRGVQD), 510–541 (ALNNLIRGHAKEGNPDSSYEILKIMSRRGVPR), 542–576 (ESNAYELLIKSYMSKGEPGDAKTALDSMVEDGHVP), 577–611 (DSSLFRSVIESLFEDGRVQTASRVMMIMIDKNVGI), 614–648 (NMDLIAKILEALLMRGHVEEALGRIDLLNQNGHTA), 651–680 (DSLLSVLSEKGKTIAALKLLDFGLERDLSL), and 681–715 (EFSSYDKVLDALLGAGKTLNAYSVLCKIMEKGSST).

This sequence belongs to the PPR family. P subfamily. In terms of assembly, component of the mitochondrial ribosome large subunit.

The protein resides in the mitochondrion. The sequence is that of Large ribosomal subunit protein mL102 (rPPR5) from Arabidopsis thaliana (Mouse-ear cress).